Consider the following 128-residue polypeptide: Probable 4-amino-4-deoxy-L-arabinose-phosphoundecaprenol flippase subunit ArnF (128 aa).

Residues 1 to 2 (MG) are Cytoplasmic-facing. A helical membrane pass occupies residues 3 to 23 (LMWGLFSVIIASVAQLSLGFA). Residues 24–35 (ASHLPPMTHLWD) lie on the Periplasmic side of the membrane. Residues 36–56 (FIAALLAFGLDARILLLGLLG) traverse the membrane as a helical segment. Residues 57-76 (YLLSVFCWYKTLHKLALSKA) are Cytoplasmic-facing. Residues 77 to 97 (YALLSMSYVLVWIASMVLPGW) form a helical membrane-spanning segment. At 98-100 (EGT) the chain is on the periplasmic side. A helical membrane pass occupies residues 101–121 (FSLKALLGVACIMSGLMLIFL). At 122-128 (PTTKQRY) the chain is on the cytoplasmic side.

Belongs to the ArnF family. In terms of assembly, heterodimer of ArnE and ArnF.

It is found in the cell inner membrane. Its pathway is bacterial outer membrane biogenesis; lipopolysaccharide biosynthesis. Translocates 4-amino-4-deoxy-L-arabinose-phosphoundecaprenol (alpha-L-Ara4N-phosphoundecaprenol) from the cytoplasmic to the periplasmic side of the inner membrane. In Shigella sonnei (strain Ss046), this protein is Probable 4-amino-4-deoxy-L-arabinose-phosphoundecaprenol flippase subunit ArnF.